Here is a 305-residue protein sequence, read N- to C-terminus: Cytochrome c biogenesis protein CcsA (305 aa).

Transmembrane regions (helical) follow at residues 11 to 31 (GLGF…FWAV), 37 to 57 (TGIV…QLVL), 63 to 83 (GHFP…ACTL), 96 to 116 (IVAA…SFAL), 141 to 161 (VIMV…AVLL), 212 to 232 (TITV…VWAN), 246 to 263 (TWAL…HTRL), and 275 to 295 (VAVV…LLGI).

This sequence belongs to the CcmF/CycK/Ccl1/NrfE/CcsA family. In terms of assembly, may interact with ccs1.

The protein localises to the cellular thylakoid membrane. Its function is as follows. Required during biogenesis of c-type cytochromes (cytochrome c6 and cytochrome f) at the step of heme attachment. In Parasynechococcus marenigrum (strain WH8102), this protein is Cytochrome c biogenesis protein CcsA.